The primary structure comprises 151 residues: Putative pre-16S rRNA nuclease (151 aa).

It belongs to the YqgF nuclease family.

The protein localises to the cytoplasm. Functionally, could be a nuclease involved in processing of the 5'-end of pre-16S rRNA. This is Putative pre-16S rRNA nuclease from Neisseria meningitidis serogroup B (strain ATCC BAA-335 / MC58).